A 385-amino-acid chain; its full sequence is tRNA (guanine-N(7)-)-methyltransferase non-catalytic subunit wuho (385 aa).

WD repeat units lie at residues 68-108, 155-194, and 198-236; these read KVEV…AKLL, GHLS…DIHS, and GHKE…ELLH.

The protein belongs to the WD repeat TRM82 family. In terms of assembly, forms a heterodimer with the catalytic subunit Mettl1. Interacts with mei-P26 and weakly interacts with bgcn; required for the function or formation of the mei-P26-bgcn-bam-sxl complex. Interacts with nanos; may be involved in mei-P26-dependent derepression of the BMP signaling pathway. Interacts with Myc; the interaction may be mediated by mei-P26 and may be involved in the regulation of ribosome biogenesis. In testis, it is present at high level in hub cells, a niche for germline stem cells of testis. Ubiquitously expressed in all testicular cells throughout spermatogenesis. Ubiquitously expressed in all germline and somatic cells of the ovary.

It is found in the nucleus. Its subcellular location is the cytoplasm. Its pathway is tRNA modification; N(7)-methylguanine-tRNA biosynthesis. Functionally, required for the Mettl1-dependent formation of N(7)-methylguanine at position 46 (m7G46) in tRNA. In the Mettl1-wuho methyltransferase complex, it is required to stabilize and induce conformational changes of the catalytic subunit. Required for binding of nanos mRNA and repression of translation by the mei-P26-bgcn-bam-sxl complex. May cooperate with mei-P26 and nanos to derepress the BMP signaling pathway. May cooperate with mei-P26 to suppress expression of a subset of microRNAs. May cooperate with mei-P26 to regulate bam expression levels in germline cells during gametogenesis. Required to promote mitosis to meiosis transition during gametogenesis. May regulate germline cell division in part by regulating ribosome biogenesis. The polypeptide is tRNA (guanine-N(7)-)-methyltransferase non-catalytic subunit wuho (Drosophila grimshawi (Hawaiian fruit fly)).